Here is a 380-residue protein sequence, read N- to C-terminus: GATOR1 complex protein NPRL2 (380 aa).

The segment at 1-133 (MGSGCRIECI…SKQKLVPIMT (133 aa)) is interaction with PDPK1. R78 contacts GDP. R78 is subject to Asymmetric dimethylarginine. Glycyl lysine isopeptide (Lys-Gly) (interchain with G-Cter in ubiquitin) cross-links involve residues K158 and K357.

This sequence belongs to the NPR2 family. In terms of assembly, within the GATOR complex, component of the GATOR1 subcomplex, made of DEPDC5, NPRL2 and NPRL3. GATOR1 mediates the strong interaction of the GATOR complex with small GTPases Rag (RagA/RRAGA, RagB/RRAGB, RagC/RRAGC and/or RagD/RRAGD) heterodimers. GATOR1 interacts with GPR155/LYCHOS; interaction takes place in presence of cholesterol and prevents interaction between GATOR1 and KICSTOR. Interacts with PDPK1. In the presence of abundant amino acids, ubiquitinated at Lys-158 and Lys-357 via 'Lys-6'-linked ubiquitination by the WDR24 component of the GATOR2 complex, thereby inhibiting the GATOR1 complex and promoting mTORC1 activation. In terms of processing, asymmetric dimethylation at Arg-78 by PRMT1 inhibits the GTPase activator activity of the GATOR1 complex and consequently inducing timely mTORC1 activation under methionine-sufficient conditions. Most abundant in skeletal muscle, followed by brain, liver and pancreas, with lower amounts in lung, kidney, placenta and heart. Expressed in the frontal lobe cortex as well as in the temporal, parietal, and occipital lobes. Expressed in most lung cancer cell lines tested.

The protein resides in the lysosome membrane. Functionally, catalytic component of the GATOR1 complex, a multiprotein complex that functions as an inhibitor of the amino acid-sensing branch of the mTORC1 pathway. In response to amino acid depletion, the GATOR1 complex has GTPase activating protein (GAP) activity and strongly increases GTP hydrolysis by RagA/RRAGA (or RagB/RRAGB) within heterodimeric Rag complexes, thereby turning them into their inactive GDP-bound form, releasing mTORC1 from lysosomal surface and inhibiting mTORC1 signaling. In the presence of abundant amino acids, the GATOR1 complex is ubiquitinated and inhibited by GATOR2. Within the GATOR1 complex, NPRL2 constitutes the catalytic subunit that mediates the GTPase activator activity and under methionine-sufficient conditions, the GTPase activator activity is inhibited by PRMT1 through methylation and consequently inducing timely mTORC1 activation. Its function is as follows. Suppresses Src-dependent tyrosine phosphorylation and activation of PDPK1 and its downstream signaling. Down-regulates PDPK1 kinase activity by interfering with tyrosine phosphorylation at 'Tyr-9', 'Tyr-373' and 'Tyr-376' residues. May act as a tumor suppressor. Suppresses cell growth and enhances sensitivity to various anticancer drugs. This chain is GATOR1 complex protein NPRL2, found in Homo sapiens (Human).